The sequence spans 162 residues: MNPRRKKRLTLAVALIGGVAAITSLLLYALNSNLNLFYTPSEIVHGKTDTGVKPEIGQRIRVGGMVTVGSMVRDPKSLHVQFAVHDSLGGEVLVTYDDLLPDLFREGQGIVAQGVLSADGKLEATEVLAKHDENYMPPEVAEAMGQKHEKLDYSQQKAPDTK.

Topologically, residues 1–8 are cytoplasmic; it reads MNPRRKKR. Residues 9–29 form a helical; Signal-anchor for type II membrane protein membrane-spanning segment; it reads LTLAVALIGGVAAITSLLLYA. At 30–162 the chain is on the periplasmic side; it reads LNSNLNLFYT…YSQQKAPDTK (133 aa). Residues His-131 and Tyr-135 each coordinate heme. The disordered stretch occupies residues 142 to 162; the sequence is EAMGQKHEKLDYSQQKAPDTK. A compositionally biased stretch (polar residues) spans 153–162; sequence YSQQKAPDTK.

It belongs to the CcmE/CycJ family.

It is found in the cell inner membrane. In terms of biological role, heme chaperone required for the biogenesis of c-type cytochromes. Transiently binds heme delivered by CcmC and transfers the heme to apo-cytochromes in a process facilitated by CcmF and CcmH. This Shewanella baltica (strain OS223) protein is Cytochrome c-type biogenesis protein CcmE.